The chain runs to 449 residues: Glutathione reductase (449 aa).

FAD contacts are provided by serine 15, glycine 16, glutamate 35, threonine 42, cysteine 43, and lysine 51. Serine 15 is a glutathione binding site. Cysteines 43 and 48 form a disulfide. Position 99 (tyrosine 99) interacts with glutathione. Residue alanine 115 coordinates FAD. Residues glycine 175, isoleucine 178, glutamate 181, arginine 198, arginine 204, and glycine 261 each contribute to the NADP(+) site. Positions 302 and 310 each coordinate FAD. An NADP(+)-binding site is contributed by alanine 340. An FAD-binding site is contributed by histidine 435. The active-site Proton acceptor is the histidine 435.

This sequence belongs to the class-I pyridine nucleotide-disulfide oxidoreductase family. In terms of assembly, homodimer. FAD serves as cofactor.

The protein localises to the cytoplasm. The enzyme catalyses 2 glutathione + NADP(+) = glutathione disulfide + NADPH + H(+). Its pathway is xenobiotic degradation; (2,4,5-trichlorophenoxy)acetate degradation. In terms of biological role, catalyzes the reduction of glutathione disulfide (GSSG) to reduced glutathione (GSH). Constitutes the major mechanism to maintain a high GSH:GSSG ratio in the cytosol. The sequence is that of Glutathione reductase (gor) from Burkholderia cepacia (Pseudomonas cepacia).